The following is a 61-amino-acid chain: Sperm protamine P1 (61 aa).

A disordered region spans residues 1-61 (MARYRHSRSR…RYSRRRRRRY (61 aa)).

This sequence belongs to the protamine P1 family. Testis.

It is found in the nucleus. The protein localises to the chromosome. Its function is as follows. Protamines substitute for histones in the chromatin of sperm during the haploid phase of spermatogenesis. They compact sperm DNA into a highly condensed, stable and inactive complex. In Onychogalea fraenata (Bridled nail-tailed wallaby), this protein is Sperm protamine P1 (PRM1).